Here is a 276-residue protein sequence, read N- to C-terminus: Rhomboid protease GlpG (276 aa).

6 consecutive transmembrane segments (helical) span residues 94–114 (GPVT…MQIL), 142–162 (ALMH…WYLG), 169–189 (LGSG…GYVQ), 192–212 (FSGP…GYVW), 229–249 (LIIF…GMSM), and 250–270 (ANGA…VDSL). Residue Ser201 is the Nucleophile of the active site. Residue His254 is part of the active site.

It belongs to the peptidase S54 family.

It localises to the cell inner membrane. The catalysed reaction is Cleaves type-1 transmembrane domains using a catalytic dyad composed of serine and histidine that are contributed by different transmembrane domains.. Functionally, rhomboid-type serine protease that catalyzes intramembrane proteolysis. This is Rhomboid protease GlpG from Escherichia coli O7:K1 (strain IAI39 / ExPEC).